We begin with the raw amino-acid sequence, 212 residues long: Probable transaldolase (212 aa).

The active-site Schiff-base intermediate with substrate is the Lys83.

It belongs to the transaldolase family. Type 3B subfamily.

It localises to the cytoplasm. The enzyme catalyses D-sedoheptulose 7-phosphate + D-glyceraldehyde 3-phosphate = D-erythrose 4-phosphate + beta-D-fructose 6-phosphate. It functions in the pathway carbohydrate degradation; pentose phosphate pathway; D-glyceraldehyde 3-phosphate and beta-D-fructose 6-phosphate from D-ribose 5-phosphate and D-xylulose 5-phosphate (non-oxidative stage): step 2/3. Functionally, transaldolase is important for the balance of metabolites in the pentose-phosphate pathway. This chain is Probable transaldolase (tal), found in Halalkalibacterium halodurans (strain ATCC BAA-125 / DSM 18197 / FERM 7344 / JCM 9153 / C-125) (Bacillus halodurans).